The sequence spans 174 residues: Large ribosomal subunit protein uL13 (174 aa).

Disordered stretches follow at residues 1 to 22 (MAFP…AKSP) and 153 to 174 (GETH…LEVK).

Belongs to the universal ribosomal protein uL13 family. Part of the 50S ribosomal subunit. Contacts proteins L3 and L20.

Functionally, this protein is one of the early assembly proteins of the 50S ribosomal subunit. Binds to the 23S rRNA. The sequence is that of Large ribosomal subunit protein uL13 (rplM) from Deinococcus radiodurans (strain ATCC 13939 / DSM 20539 / JCM 16871 / CCUG 27074 / LMG 4051 / NBRC 15346 / NCIMB 9279 / VKM B-1422 / R1).